Here is a 487-residue protein sequence, read N- to C-terminus: MASSAEGDEGTVVALAGVLQSGFQELSLNKLATSLGASEQALRLIISIFLGYPFALFYRHYLFYKETYLIHLFHTFTGLSIAYFNFGNQLYHSLLCIVLQFLILRLMGRTITAVLTTFCFQMAYLLAGYYYTATGNYDIKWTMPHCVLTLKLIGLAVDYFDGGKDQNSLSSEQQKYAIRGVPSLLEVAGFSYFYGAFLVGPQFSMNHYMKLVQGELIDIPGKIPNSIIPALKRLSLGLFYLVGYTLLSPHITEDYLLTEDYDNHPFWFRCMYMLIWGKFVLYKYVTCWLVTEGVCILTGLGFNGFEEKGKAKWDACANMKVWLFETNPRFTGTIASFNINTNAWVARYIFKRLKFLGNKELSQGLSLLFLALWHGLHSGYLVCFQMEFLIVIVERQAARLIQESPTLSKLAAITVLQPFYYLVQQTIHWLFMGYSMTAFCLFTWDKWLKVYKSIYFLGHIFFLSLLFILPYIHKAMVPRKEKLKKME.

Residue alanine 2 is modified to N-acetylalanine. 6 helical membrane-spanning segments follow: residues 44–64, 84–104, 111–131, 180–200, 227–247, and 285–305; these read LIIS…YLFY, FNFG…FLIL, ITAV…GYYY, GVPS…FLVG, IIPA…YTLL, and VTCW…FNGF. Active-site residues include asparagine 338 and histidine 374. The next 3 membrane-spanning stretches (helical) occupy residues 364-384, 422-442, and 453-473; these read GLSL…LVCF, LVQQ…FCLF, and SIYF…PYIH. The short motif at 484-487 is the Di-lysine motif element; it reads KKME.

Belongs to the membrane-bound acyltransferase family. As to expression, highly expressed in liver, pancreas and adipose tissue. Very low expression in skeletal muscle and heart. Detected in neutrophils.

Its subcellular location is the endoplasmic reticulum membrane. The enzyme catalyses a 1-acyl-sn-glycero-3-phosphocholine + an acyl-CoA = a 1,2-diacyl-sn-glycero-3-phosphocholine + CoA. It catalyses the reaction a 1-acyl-sn-glycero-3-phosphoethanolamine + an acyl-CoA = a 1,2-diacyl-sn-glycero-3-phosphoethanolamine + CoA. The catalysed reaction is a 1-acyl-sn-glycero-3-phospho-L-serine + an acyl-CoA = a 1,2-diacyl-sn-glycero-3-phospho-L-serine + CoA. It carries out the reaction (9Z,12Z)-octadecadienoyl-CoA + a 1-acyl-sn-glycero-3-phosphocholine = 1-acyl-2-(9Z,12Z)-octadecadienoyl-sn-glycero-3-phosphocholine + CoA. The enzyme catalyses (5Z,8Z,11Z,14Z)-eicosatetraenoyl-CoA + a 1-acyl-sn-glycero-3-phosphocholine = 1-acyl-2-(5Z,8Z,11Z,14Z-eicosatetraenoyl)-sn-glycero-3-phosphocholine + CoA. It catalyses the reaction dodecanoyl-CoA + 1-hexadecanoyl-sn-glycero-3-phosphocholine = 1-hexadecanoyl-2-dodecanoyl-sn-glycero-3-phosphocholine + CoA. The catalysed reaction is octadecanoyl-CoA + 1-hexadecanoyl-sn-glycero-3-phosphocholine = 1-hexadecanoyl-2-octadecanoyl-sn-glycero-3-phosphocholine + CoA. It carries out the reaction 1-dodecanoyl-sn-glycero-3-phosphocholine + hexadecanoyl-CoA = 1-dodecanoyl-2-hexadecanoyl-sn-glycero-3-phosphocholine + CoA. The enzyme catalyses 1-tetradecanoyl-sn-glycero-3-phosphocholine + hexadecanoyl-CoA = 1-tetradecanoyl-2-hexadecanoyl-sn-glycero-3-phosphocholine + CoA. It catalyses the reaction 1-hexadecanoyl-sn-glycero-3-phosphocholine + hexadecanoyl-CoA = 1,2-dihexadecanoyl-sn-glycero-3-phosphocholine + CoA. The catalysed reaction is 1-octadecanoyl-sn-glycero-3-phosphocholine + hexadecanoyl-CoA = 1-octadecanoyl-2-hexadecanoyl-sn-glycero-3-phosphocholine + CoA. It carries out the reaction 1-(9Z-octadecenoyl)-sn-glycero-3-phosphocholine + hexadecanoyl-CoA = 1-(9Z-octadecenoyl)-2-hexadecanoyl-sn-glycero-3-phosphocholine + CoA. The enzyme catalyses (9Z)-hexadecenoyl-CoA + 1-hexadecanoyl-sn-glycero-3-phosphocholine = 1-hexadecanoyl-2-(9Z-hexadecenoyl)-sn-glycero-3-phosphocholine + CoA. It catalyses the reaction 1-hexadecanoyl-sn-glycero-3-phosphocholine + (9Z)-octadecenoyl-CoA = 1-hexadecanoyl-2-(9Z-octadecenoyl)-sn-glycero-3-phosphocholine + CoA. The catalysed reaction is (9Z,12Z)-octadecadienoyl-CoA + 1-hexadecanoyl-sn-glycero-3-phosphocholine = 1-hexadecanoyl-2-(9Z,12Z-octadecadienoyl)-sn-glycero-3-phosphocholine + CoA. It carries out the reaction 1-dodecanoyl-sn-glycero-3-phosphocholine + (5Z,8Z,11Z,14Z)-eicosatetraenoyl-CoA = 1-dodecanoyl-2-(5Z,8Z,11Z,14Z)-eicosatetraenoyl-sn-glycero-3-phosphocholine + CoA. The enzyme catalyses (5Z,8Z,11Z,14Z)-eicosatetraenoyl-CoA + 1-hexadecanoyl-sn-glycero-3-phosphocholine = 1-hexadecanoyl-2-(5Z,8Z,11Z,14Z-eicosatetraenoyl)-sn-glycero-3-phosphocholine + CoA. It catalyses the reaction 1-octadecanoyl-sn-glycero-3-phosphocholine + (5Z,8Z,11Z,14Z)-eicosatetraenoyl-CoA = 1-octadecanoyl-2-(5Z,8Z,11Z,14Z-eicosatetraenoyl)-sn-glycero-3-phosphocholine + CoA. The catalysed reaction is 1-eicosanoyl-sn-glycero-3-phosphocholine + (5Z,8Z,11Z,14Z)-eicosatetraenoyl-CoA = 1-eicosanoyl-2-(5Z,8Z,11Z,14Z)-eicosatetraenoyl-sn-glycero-3-phosphocholine + CoA. It carries out the reaction 1-(9Z-octadecenoyl)-sn-glycero-3-phosphocholine + (9Z)-octadecenoyl-CoA = 1,2-di-(9Z-octadecenoyl)-sn-glycero-3-phosphocholine + CoA. The enzyme catalyses 1-(9Z-octadecenoyl)-sn-glycero-3-phosphocholine + (9Z,12Z)-octadecadienoyl-CoA = 1-(9Z)-octadecenoyl-2-(9Z,12Z)-octadecadienoyl-sn-glycero-3-phosphocholine + CoA. It catalyses the reaction 1-(9Z-octadecenoyl)-sn-glycero-3-phosphocholine + (5Z,8Z,11Z,14Z)-eicosatetraenoyl-CoA = 1-(9Z)-octadecenoyl-2-(5Z,8Z,11Z,14Z)-icosatetraenoyl-sn-glycero-3-phosphocholine + CoA. The catalysed reaction is a 1-acyl-sn-glycero-3-phosphoethanolamine + (9Z,12Z)-octadecadienoyl-CoA = 1-acyl-2-(9Z,12Z)-octadecadienoyl-sn-glycero-3-phosphoethanolamine + CoA. It carries out the reaction 1-(9Z-octadecenoyl)-sn-glycero-3-phosphoethanolamine + (9Z,12Z)-octadecadienoyl-CoA = 1-(9Z)-octadecenoyl-2-(9Z,12Z)-octadecadienoyl-sn-glycero-3-phosphoethanolamine + CoA. The enzyme catalyses 1-(10Z-heptadecenoyl)-sn-glycero-3-phosphoethanolamine + (9Z,12Z)-octadecadienoyl-CoA = 1-(10Z-heptadecenoyl)-2-(9Z,12Z-octadecadienoyl)-sn-glycero-3-phosphoethanolamine + CoA. It catalyses the reaction a 1-acyl-sn-glycero-3-phosphoethanolamine + (5Z,8Z,11Z,14Z)-eicosatetraenoyl-CoA = 1-acyl-2-(5Z,8Z,11Z,14Z)-eicosatetraenoyl-sn-glycero-3-phosphoethanolamine + CoA. The catalysed reaction is 1-hexadecanoyl-sn-glycero-3-phosphoethanolamine + (5Z,8Z,11Z,14Z)-eicosatetraenoyl-CoA = 1-hexadecanoyl-2-(5Z,8Z,11Z,14Z-eicosatetraenoyl)-sn-glycero-3-phosphoethanolamine + CoA. It carries out the reaction 1-(9Z-octadecenoyl)-sn-glycero-3-phosphoethanolamine + (5Z,8Z,11Z,14Z)-eicosatetraenoyl-CoA = 1-(9Z)-octadecenoyl-2-(5Z,8Z,11Z,14Z)-eicosatetraenoyl-sn-glycero-3-phosphoethanolamine + CoA. The enzyme catalyses 1-(10Z-heptadecenoyl)-sn-glycero-3-phosphoethanolamine + (5Z,8Z,11Z,14Z)-eicosatetraenoyl-CoA = 1-(10Z-heptadecenoyl)-2-(5Z,8Z,11Z,14Z-eicosatetraenoyl)-sn-glycero-3-phosphoethanolamine + CoA. It catalyses the reaction a 1-O-(1Z-alkenyl)-sn-glycero-3-phosphoethanolamine + (5Z,8Z,11Z,14Z)-eicosatetraenoyl-CoA = 1-O-(1Z)-alkenyl-2-(5Z,8Z,11Z,14Z)-eicosatetraenoyl-sn-glycero-3-phosphoethanolamine + CoA. The catalysed reaction is a 1-acyl-sn-glycero-3-phospho-L-serine + (9Z,12Z)-octadecadienoyl-CoA = 1-acyl-2-(9Z,12Z-octadecadienoyl)-sn-glycero-3-phospho-L-serine + CoA. It carries out the reaction a 1-acyl-sn-glycero-3-phospho-L-serine + (5Z,8Z,11Z,14Z)-eicosatetraenoyl-CoA = 1-acyl-2-(5Z,8Z,11Z,14Z-eicosatetraenoyl)-sn-glycero-3-phospho-L-serine + CoA. The enzyme catalyses 1-hexadecanoyl-sn-glycero-3-phospho-L-serine + (9Z)-octadecenoyl-CoA = 1-hexadecanoyl-2-(9Z-octadecenoyl)-sn-glycero-3-phospho-L-serine + CoA. It catalyses the reaction 1-(9Z-octadecenoyl)-sn-glycero-3-phospho-L-serine + (9Z)-octadecenoyl-CoA = 1,2-di-(9Z)-octadecenoyl-sn-glycero-3-phospho-L-serine + CoA. The catalysed reaction is 1-hexadecanoyl-sn-glycero-3-phospho-L-serine + (9Z,12Z)-octadecadienoyl-CoA = 1-hexadecanoyl-2-(9Z,12Z-octadecadienoyl)-sn-glycero-3-phospho-L-serine + CoA. It carries out the reaction 1-(9Z-octadecenoyl)-sn-glycero-3-phospho-L-serine + (9Z,12Z)-octadecadienoyl-CoA = 1-(9Z-octadecenoyl)-2-(9Z,12Z-octadienoyl)-sn-glycero-3-phospho-L-serine + CoA. The enzyme catalyses 1-hexadecanoyl-sn-glycero-3-phospho-L-serine + (5Z,8Z,11Z,14Z)-eicosatetraenoyl-CoA = 1-hexadecanoyl-2-(5Z,8Z,11Z,14Z-eicosatetraenoyl)-sn-glycero-3-phospho-L-serine + CoA. It catalyses the reaction 1-(9Z-octadecenoyl)-sn-glycero-3-phospho-L-serine + (5Z,8Z,11Z,14Z)-eicosatetraenoyl-CoA = 1-(9Z-octadecenoyl)-2-(5Z,8Z,11Z,14Z-eicosatetraenoyl)-sn-glycero-3-phospho-L-serine + CoA. It functions in the pathway lipid metabolism; phospholipid metabolism. Its activity is regulated as follows. Activity is inhibited by thimerosal. Its function is as follows. Lysophospholipid O-acyltransferase (LPLAT) that catalyzes the reacylation step of the phospholipid remodeling process also known as the Lands cycle. Catalyzes transfer of the fatty acyl chain from fatty acyl-CoA to 1-acyl lysophospholipid to form various classes of phospholipids. Converts 1-acyl lysophosphatidylcholine (LPC) into phosphatidylcholine (PC) (LPCAT activity), 1-acyl lysophosphatidylserine (LPS) into phosphatidylserine (PS) (LPSAT activity) and 1-acyl lysophosphatidylethanolamine (LPE) into phosphatidylethanolamine (PE) (LPEAT activity). Favors polyunsaturated fatty acyl-CoAs as acyl donors compared to saturated fatty acyl-CoAs. Has higher activity for LPC acyl acceptors compared to LPEs and LPSs. Can also transfer the fatty acyl chain from fatty acyl-CoA to 1-O-alkyl lysophospholipid or 1-O-alkenyl lysophospholipid with lower efficiency. Acts as a major LPC O-acyltransferase in liver and intestine. As a component of the liver X receptor/NR1H3 or NR1H2 signaling pathway, mainly catalyzes the incorporation of arachidonate into PCs of endoplasmic reticulum (ER) membranes, increasing membrane dynamics and enabling triacylglycerols transfer to nascent very low-density lipoprotein (VLDL) particles. Promotes processing of sterol regulatory protein SREBF1 in hepatocytes, likely by facilitating the translocation of SREBF1-SCAP complex from ER to the Golgi apparatus. Participates in mechanisms by which the liver X receptor/NR1H3 or NR1H2 signaling pathway counteracts lipid-induced ER stress response and inflammation. Down-regulates hepatic inflammation by limiting arachidonic acid availability for synthesis of inflammatory eicosanoids, such as prostaglandins. In enterocytes, acts as a component of a gut-brain feedback loop that coordinates dietary lipid absorption and food intake. Regulates the abundance of PCs containing linoleate and arachidonate in enterocyte membranes, enabling passive diffusion of fatty acids and cholesterol across the membrane for efficient chylomicron assembly. In the intestinal crypt, acts as a component of dietary-responsive phospholipid-cholesterol axis, regulating the biosynthesis of cholesterol and its mitogenic effects on intestinal stem cells. The protein is Lysophospholipid acyltransferase 5 (LPCAT3) of Homo sapiens (Human).